The chain runs to 475 residues: UDP-N-acetylmuramate--L-alanine ligase (475 aa).

ATP is bound at residue 114–120 (GTHGKTT).

The protein belongs to the MurCDEF family.

It localises to the cytoplasm. It carries out the reaction UDP-N-acetyl-alpha-D-muramate + L-alanine + ATP = UDP-N-acetyl-alpha-D-muramoyl-L-alanine + ADP + phosphate + H(+). Its pathway is cell wall biogenesis; peptidoglycan biosynthesis. Cell wall formation. The polypeptide is UDP-N-acetylmuramate--L-alanine ligase (Bartonella tribocorum (strain CIP 105476 / IBS 506)).